Reading from the N-terminus, the 409-residue chain is Accessory Sec system protein translocase subunit SecY2 (409 aa).

10 consecutive transmembrane segments (helical) span residues 16–36 (ILITFSLIIIFLLGRYVPIPG), 61–81 (LSQVGVFSLGIGPMMTTMILL), 104–124 (VVMLVIAIIQGLAIAISFQYH), 132–152 (LLLATMILVTGAYIISWIGNL), 161–181 (MTILVVVGMLVGQFNNIPLIF), 190–210 (LAIILFLLWTLVAMYLMITFE), 242–262 (GMAFMYVYTLLMFPQYIIILL), 286–306 (GVVIYMILMLVLSVAFTFVNI), 341–361 (LFGTFSGFFMAFLGGVPLLFA), and 374–394 (TGIFMMITGMSFMILDEFQVI).

It belongs to the SecY/SEC61-alpha family. SecY2 subfamily. Component of the accessory SecA2/SecY2 protein translocase complex required to export cell wall proteins. May form heterotrimers with SecE and SecG subunits.

Its subcellular location is the cell membrane. Its function is as follows. Part of the accessory SecA2/SecY2 system specifically required for export of possible cell wall proteins. The central subunit of a protein translocation channel. The sequence is that of Accessory Sec system protein translocase subunit SecY2 from Streptococcus agalactiae serotype Ia (strain ATCC 27591 / A909 / CDC SS700).